Here is a 240-residue protein sequence, read N- to C-terminus: Adapter protein MecA (240 aa).

It belongs to the MecA family. As to quaternary structure, homodimer.

Enables the recognition and targeting of unfolded and aggregated proteins to the ClpC protease or to other proteins involved in proteolysis. This Streptococcus mutans serotype c (strain ATCC 700610 / UA159) protein is Adapter protein MecA.